A 199-amino-acid polypeptide reads, in one-letter code: Large ribosomal subunit protein uL18 (199 aa).

Belongs to the universal ribosomal protein uL18 family. In terms of assembly, part of the 50S ribosomal subunit. Contacts the 5S and 23S rRNAs.

This is one of the proteins that bind and probably mediate the attachment of the 5S RNA into the large ribosomal subunit, where it forms part of the central protuberance. The sequence is that of Large ribosomal subunit protein uL18 from Saccharolobus solfataricus (strain ATCC 35092 / DSM 1617 / JCM 11322 / P2) (Sulfolobus solfataricus).